Reading from the N-terminus, the 357-residue chain is Peptide chain release factor 1 (357 aa).

Glutamine 236 carries the N5-methylglutamine modification.

This sequence belongs to the prokaryotic/mitochondrial release factor family. Post-translationally, methylated by PrmC. Methylation increases the termination efficiency of RF1.

The protein localises to the cytoplasm. Functionally, peptide chain release factor 1 directs the termination of translation in response to the peptide chain termination codons UAG and UAA. The protein is Peptide chain release factor 1 (prfA) of Mycobacterium bovis (strain ATCC BAA-935 / AF2122/97).